We begin with the raw amino-acid sequence, 331 residues long: Biotin synthase (331 aa).

Positions 40–269 constitute a Radical SAM core domain; sequence YRVQLASLLS…HARVRLSAGR (230 aa). The [4Fe-4S] cluster site is built by cysteine 55, cysteine 59, and cysteine 62. 4 residues coordinate [2Fe-2S] cluster: cysteine 100, cysteine 132, cysteine 192, and arginine 264.

Belongs to the radical SAM superfamily. Biotin synthase family. Homodimer. [4Fe-4S] cluster serves as cofactor. The cofactor is [2Fe-2S] cluster.

It catalyses the reaction (4R,5S)-dethiobiotin + (sulfur carrier)-SH + 2 reduced [2Fe-2S]-[ferredoxin] + 2 S-adenosyl-L-methionine = (sulfur carrier)-H + biotin + 2 5'-deoxyadenosine + 2 L-methionine + 2 oxidized [2Fe-2S]-[ferredoxin]. It participates in cofactor biosynthesis; biotin biosynthesis; biotin from 7,8-diaminononanoate: step 2/2. Its function is as follows. Catalyzes the conversion of dethiobiotin (DTB) to biotin by the insertion of a sulfur atom into dethiobiotin via a radical-based mechanism. This Synechococcus sp. (strain CC9605) protein is Biotin synthase.